We begin with the raw amino-acid sequence, 363 residues long: Dual-specificity RNA methyltransferase RlmN (363 aa).

Catalysis depends on glutamate 102, which acts as the Proton acceptor. The 237-residue stretch at 108-344 (EKKRSTLCVS…TTTIRKNRGE (237 aa)) folds into the Radical SAM core domain. Cysteine 115 and cysteine 350 are oxidised to a cystine. [4Fe-4S] cluster contacts are provided by cysteine 122, cysteine 126, and cysteine 129. S-adenosyl-L-methionine contacts are provided by residues 174-175 (GE), serine 206, 228-230 (SLH), and asparagine 307. Residue cysteine 350 is the S-methylcysteine intermediate of the active site.

It belongs to the radical SAM superfamily. RlmN family. [4Fe-4S] cluster serves as cofactor.

Its subcellular location is the cytoplasm. The enzyme catalyses adenosine(2503) in 23S rRNA + 2 reduced [2Fe-2S]-[ferredoxin] + 2 S-adenosyl-L-methionine = 2-methyladenosine(2503) in 23S rRNA + 5'-deoxyadenosine + L-methionine + 2 oxidized [2Fe-2S]-[ferredoxin] + S-adenosyl-L-homocysteine. It catalyses the reaction adenosine(37) in tRNA + 2 reduced [2Fe-2S]-[ferredoxin] + 2 S-adenosyl-L-methionine = 2-methyladenosine(37) in tRNA + 5'-deoxyadenosine + L-methionine + 2 oxidized [2Fe-2S]-[ferredoxin] + S-adenosyl-L-homocysteine. Specifically methylates position 2 of adenine 2503 in 23S rRNA and position 2 of adenine 37 in tRNAs. m2A2503 modification seems to play a crucial role in the proofreading step occurring at the peptidyl transferase center and thus would serve to optimize ribosomal fidelity. The polypeptide is Dual-specificity RNA methyltransferase RlmN (Buchnera aphidicola subsp. Acyrthosiphon pisum (strain APS) (Acyrthosiphon pisum symbiotic bacterium)).